Consider the following 714-residue polypeptide: ATP-dependent RNA helicase MSS116, mitochondrial (714 aa).

Residues M1–W37 constitute a mitochondrion transit peptide. The Q motif motif lies at S74–Q102. In terms of domain architecture, Helicase ATP-binding spans M106–Y296. A119–T126 lines the ATP pocket. The DEAD box motif lies at D234–D237. One can recognise a Helicase C-terminal domain in the interval H335–G498. Residues S581–E714 are disordered. Composition is skewed to basic and acidic residues over residues R619–S640, Y656–Y671, and S679–N697.

It belongs to the DEAD box helicase family. DDX18/HAS1 subfamily.

It localises to the mitochondrion matrix. The enzyme catalyses ATP + H2O = ADP + phosphate + H(+). In terms of biological role, ATP-dependent RNA helicase required for mitochondrial splicing of group I and II introns. Also required for efficient mitochondrial translation. This Meyerozyma guilliermondii (strain ATCC 6260 / CBS 566 / DSM 6381 / JCM 1539 / NBRC 10279 / NRRL Y-324) (Yeast) protein is ATP-dependent RNA helicase MSS116, mitochondrial (MSS116).